Here is a 650-residue protein sequence, read N- to C-terminus: Sterol O-acyltransferase 2 (650 aa).

Positions Leu41–Val79 are disordered. The segment covering Ala64–Ser75 has biased composition (polar residues). 5 helical membrane-spanning segments follow: residues Phe223–Ile243, Thr300–Thr320, Ile412–Tyr432, Ile450–Met470, and Leu493–Trp513. An FYXDWWN motif motif is present at residues Phe531–Asn537. 2 helical membrane passes run Ala575–Phe595 and Val630–Phe650. His587 is an active-site residue.

Belongs to the membrane-bound acyltransferase family. Sterol o-acyltransferase subfamily.

It localises to the endoplasmic reticulum membrane. In terms of biological role, sterol O-acyltransferase that catalyzes the formation of stery esters. The protein is Sterol O-acyltransferase 2 (ARE2) of Saccharomyces uvarum (strain ATCC 76518 / CBS 7001 / CLIB 283 / NBRC 10550 / MCYC 623 / NCYC 2669 / NRRL Y-11845) (Yeast).